The following is a 375-amino-acid chain: Trichodiene synthase (375 aa).

This sequence belongs to the trichodiene synthase family.

The catalysed reaction is (2E,6E)-farnesyl diphosphate = trichodiene + diphosphate. Its pathway is sesquiterpene biosynthesis; trichothecene biosynthesis. TS is a member of the terpene cyclase group of enzymes. It catalyzes the isomerization and cyclization of farnesyl pyro-phosphate to form trichodiene, the first cyclic intermediate in the biosynthetic pathway for trichothecenes. It serves to branch trichothecene biosynthesis from the isoprenoid pathway. This Gibberella zeae (strain ATCC MYA-4620 / CBS 123657 / FGSC 9075 / NRRL 31084 / PH-1) (Wheat head blight fungus) protein is Trichodiene synthase (TRI5).